We begin with the raw amino-acid sequence, 170 residues long: MNTPRIPIASHQAVMRCLRDKLQQANLTLQTDYTEPAVSYQQRGATAGTAWLQHWEIRLNPVLLQENQQTFIDEVVPHELAHLLVYARFGRVAPHGKEWRWMMENVLHVPAKRTHRFAVQSVQGKTFTYLCDCQRHELTIRRHNRVLRGETEYRCRRCGKTLRHDVKSSI.

Residues 22 to 163 enclose the SprT-like domain; the sequence is LQQANLTLQT…RCRRCGKTLR (142 aa). Zn(2+) is bound at residue His78. Glu79 is an active-site residue. His82 provides a ligand contact to Zn(2+).

It belongs to the SprT family. Zn(2+) serves as cofactor.

It is found in the cytoplasm. The protein is Protein SprT of Pectobacterium atrosepticum (strain SCRI 1043 / ATCC BAA-672) (Erwinia carotovora subsp. atroseptica).